The sequence spans 362 residues: Glutamate 5-kinase (362 aa).

Lys3 contributes to the ATP binding site. Substrate-binding residues include Ser43, Asp128, and Asn140. ATP contacts are provided by residues 160–161 (TD) and 202–208 (TGGMRTK). The PUA domain occupies 267-348 (AGAILVDAGA…RDIENVLGYS (82 aa)).

The protein belongs to the glutamate 5-kinase family.

It is found in the cytoplasm. The enzyme catalyses L-glutamate + ATP = L-glutamyl 5-phosphate + ADP. It functions in the pathway amino-acid biosynthesis; L-proline biosynthesis; L-glutamate 5-semialdehyde from L-glutamate: step 1/2. Catalyzes the transfer of a phosphate group to glutamate to form L-glutamate 5-phosphate. The protein is Glutamate 5-kinase of Xanthomonas oryzae pv. oryzae (strain MAFF 311018).